We begin with the raw amino-acid sequence, 152 residues long: MVILEQTHLVKNKTVDNKKSMKYSIFQQALTIAVILLISKIIESFMPIPMPASVIGLVLLFIALCTGIVKLGQVETVGTALTNNIGFLFVPAGISVINSLPILKQSPILIILLIIISTLLLLICTGFASQLLVTKSLFPSKEKNEETSHVGG.

Transmembrane regions (helical) follow at residues 23-43 (YSIF…KIIE), 45-65 (FMPI…IALC), 77-97 (VGTA…ISVI), and 108-128 (ILII…TGFA).

Belongs to the CidA/LrgA family. LrgA subfamily.

The protein resides in the cell membrane. Functionally, inhibits the expression or activity of extracellular murein hydrolases by interacting, possibly with LrgB, with the holin-like proteins CidA and/or CidB. The LrgAB and CidAB proteins may affect the proton motive force of the membrane. May be involved in programmed cell death (PCD), possibly triggering PCD in response to antibiotics and environmental stresses. The protein is Antiholin-like protein LrgA of Staphylococcus epidermidis (strain ATCC 35984 / DSM 28319 / BCRC 17069 / CCUG 31568 / BM 3577 / RP62A).